Reading from the N-terminus, the 514-residue chain is 1-pyrroline-5-carboxylate dehydrogenase (514 aa).

Residues glutamate 286 and cysteine 320 contribute to the active site.

This sequence belongs to the aldehyde dehydrogenase family. RocA subfamily.

The enzyme catalyses L-glutamate 5-semialdehyde + NAD(+) + H2O = L-glutamate + NADH + 2 H(+). It participates in amino-acid degradation; L-proline degradation into L-glutamate; L-glutamate from L-proline: step 2/2. The protein is 1-pyrroline-5-carboxylate dehydrogenase of Staphylococcus aureus (strain MSSA476).